The following is a 447-amino-acid chain: Glutamate--tRNA ligase 1 (447 aa).

A 'HIGH' region motif is present at residues 10–20 (PSPTGMLHVGN). The short motif at 240–244 (KISKR) is the 'KMSKS' region element. Position 243 (K243) interacts with ATP.

The protein belongs to the class-I aminoacyl-tRNA synthetase family. Glutamate--tRNA ligase type 1 subfamily. Monomer.

It is found in the cytoplasm. The catalysed reaction is tRNA(Glu) + L-glutamate + ATP = L-glutamyl-tRNA(Glu) + AMP + diphosphate. Functionally, catalyzes the attachment of glutamate to tRNA(Glu) in a two-step reaction: glutamate is first activated by ATP to form Glu-AMP and then transferred to the acceptor end of tRNA(Glu). The chain is Glutamate--tRNA ligase 1 from Rickettsia conorii (strain ATCC VR-613 / Malish 7).